The chain runs to 546 residues: Chaperonin GroEL (546 aa).

ATP-binding positions include 30–33, Lys-51, 87–91, Gly-415, 479–481, and Asp-495; these read TLGP, DGTTT, and NAA.

This sequence belongs to the chaperonin (HSP60) family. As to quaternary structure, forms a cylinder of 14 subunits composed of two heptameric rings stacked back-to-back. Interacts with the co-chaperonin GroES.

It localises to the cytoplasm. The catalysed reaction is ATP + H2O + a folded polypeptide = ADP + phosphate + an unfolded polypeptide.. Functionally, together with its co-chaperonin GroES, plays an essential role in assisting protein folding. The GroEL-GroES system forms a nano-cage that allows encapsulation of the non-native substrate proteins and provides a physical environment optimized to promote and accelerate protein folding. This chain is Chaperonin GroEL, found in Azotobacter vinelandii.